A 439-amino-acid chain; its full sequence is Sequestosome-1 (439 aa).

N-acetylalanine is present on A2. The interaction with LCK stretch occupies residues 2 to 48 (ASLTVKAYLLGKEEAAREIRRFSFCFSPEPEAEAAAGPGPCERLLSR). One can recognise a PB1 domain in the interval 3–100 (SLTVKAYLLG…DIFRIYIKEK (98 aa)). Phosphoserine is present on S24. Positions 41–105 (PCERLLSRVA…YIKEKKECRR (65 aa)) are interaction with PRKCZ and dimerization. An interaction with PAWR region spans residues 48 to 78 (RVAVLFPALRPGGFQAHYRDEDGDLVAFSSD). Positions 119-221 (VHPNVICDGC…DGRPCPTAES (103 aa)) are interaction with GABRR3. The ZZ-type zinc finger occupies 120 to 170 (HPNVICDGCNGPVVGTRYKCSVCPDYDLCSVCEGKGLHREHSKLIFPNPFG). Residues C125, C128, C139, and C142 each coordinate Zn(2+). At Y145 the chain carries Phosphotyrosine. Zn(2+) is bound by residues C148, C151, H157, and H160. Residues 167–217 (NPFGHLSDSFSHSRWLRKLKHGHFGWPGWEMGPPGNWSPRPPRAGDGRPCP) form an LIM protein-binding region. A phosphoserine mark is found at S173, S175, and S204. Positions 201 to 231 (GNWSPRPPRAGDGRPCPTAESASAPSEDPNV) are disordered. Positions 225-230 (PSEDPN) match the TRAF6-binding motif. A phosphoserine mark is found at S246 and S263. The segment at 259–389 (GGKRSRLTPT…ALYPHLPPEA (131 aa)) is disordered. Positions 265–292 (LTPTSAESSSTGTEDKSGTQPSSCSSEV) are enriched in polar residues. Phosphothreonine is present on T266. The segment at 266–439 (TPTSAESSST…IQYSKHPPPL (174 aa)) is interaction with NTRK1. Residues S269 and S281 each carry the phosphoserine modification. A lipid anchor (S-palmitoyl cysteine) is attached at C288. A phosphoserine mark is found at S305, S327, and S331. An MAP1LC3B-binding region spans residues 320 to 341 (QPEELMESDNCSGGDDDWTHLS). Positions 335 to 340 (DDWTHL) match the LIR motif. Residues 336 to 346 (DWTHLSSKEVD) are compositionally biased toward basic and acidic residues. The interaction with KEAP1 stretch occupies residues 346–351 (DPSTGE). Phosphoserine is present on residues S348, S354, S360, S364, and S365. Residues 350-372 (GELQSLQMPESEGPSSLDPSQEG) show a composition bias toward polar residues. One can recognise a UBA domain in the interval 388–433 (EADPRLIESLSQMLSMGFSDEGGWLTRLLQTKNYDIGAALDTIQYS). A Phosphoserine; by ULK1 and TBK1 modification is found at S402. S406 bears the Phosphoserine mark. N6-acetyllysine; alternate occurs at positions 419 and 434. K419 is covalently cross-linked (Glycyl lysine isopeptide (Lys-Gly) (interchain with G-Cter in ubiquitin); alternate). Residue K434 forms a Glycyl lysine isopeptide (Lys-Gly) (interchain with G-Cter in SUMO2); alternate linkage.

In terms of assembly, homooligomer or heterooligomer; may form homotypic arrays. Dimerization interferes with ubiquitin binding. Component of a ternary complex with PAWR and PRKCZ. Forms a complex with JUB/Ajuba, PRKCZ and TRAF6. Identified in a complex with TRAF6 and CYLD. Identified in a heterotrimeric complex with ubiquitin and ZFAND5, where ZFAND5 and SQSTM1 both interact with the same ubiquitin molecule. Interacts (via LIR motif) with MAP1LC3A and MAP1LC3B, as well as with other ATG8 family members, including GABARAP, GABARAPL1 and GABARAPL2; these interactions are necessary for the recruitment MAP1 LC3 family members to inclusion bodies containing polyubiquitinated protein aggregates and for their degradation by autophagy. Interacts directly with PRKCI and PRKCZ. Interacts with EBI3, LCK, RASA1, NR2F2, NTRK1, NTRK2, NTRK3, NBR1, MAP2K5 and MAPKAPK5. Upon TNF-alpha stimulation, interacts with RIPK1 probably bridging IKBKB to the TNF-R1 complex composed of TNF-R1/TNFRSF1A, TRADD and RIPK1. Interacts with the proteasome subunits PSMD4 and PSMC2. Interacts with TRAF6. Interacts with 'Lys-63'-linked polyubiquitinated MAPT/TAU. Interacts with FHOD3. Interacts with CYLD. Interacts with SESN1. Interacts with SESN2. Interacts with ULK1. Interacts with UBD. Interacts with WDR81; the interaction is direct and regulates the interaction of SQSTM1 with ubiquitinated proteins. Interacts with WDFY3; this interaction is required to recruit WDFY3 to cytoplasmic bodies and to PML bodies. Interacts with LRRC25. Interacts with STING1; leading to relocalization of STING1 to autophagosomes. Interacts (when phosphorylated at Ser-348) with KEAP1; the interaction is direct and inactivates the BCR(KEAP1) complex by sequestering KEAP1 in inclusion bodies, promoting its degradation. Interacts with MOAP1; promoting dissociation of SQSTM1 inclusion bodies that sequester KEAP1. Interacts with GBP1. Interacts with TAX1BP1. Interacts with (ubiquitinated) PEX5; specifically binds PEX5 ubiquitinated at 'Lys-209' in response to reactive oxygen species (ROS). Interacts (via PB1 domain) with TNS2; the interaction leads to sequestration of TNS2 in cytoplasmic aggregates with SQSTM1 and promotes TNS2 ubiquitination and proteasomal degradation. Interacts with IRS1; the interaction is disrupted by the presence of tensin TNS2. Interacts with TRIM5. Interacts with TRIM11 (when ubiquitinated); promoting AIM2 recruitment to autophagosomes and autophagy-dependent degradation of AIM2. Interacts with TRIM13. Interacts with TRIM16. Interacts with TRIM23. Interacts with TRIM50. Interacts with TRIM55. Interacts with ECSIT; this interaction inhibits TLR4 signaling via functional regulation of the TRAF6-ECSIT complex. Interacts with GABRR1, GABRR2 and GABRR3. Interacts with WDR83. Interacts with GRB2. Interacts with USP12; the interaction is independent of USP12 deubiquitinase activity and may be involved in regulation of autophagic flux. Interacts with ASB6. Post-translationally, phosphorylated. Phosphorylation at Ser-406 by ULK1 destabilizes the UBA dimer interface and increases binding affinity to ubiquitinated proteins. Phosphorylation at Ser-406 also primes for subsequent phosphorylation at Ser-402. Phosphorylation at Ser-402 by CK2 or ULK1 promotes binding to ubiquitinated proteins by increasing the affinity between the UBA domain and polyubiquitin chains. Phosphorylation at Ser-402 by ULK1 is stimulated by SESN2. Phosphorylated at Ser-402 by TBK1, leading to promote relocalization of 'Lys-63'-linked ubiquitinated STING1 to autophagosomes. Phosphorylation at Ser-348 by ULK1 promotes interaction with KEAP1 and inactivation of the BCR(KEAP1) complex, promoting NFE2L2/NRF2 nuclear accumulation and expression of phase II detoxifying enzymes. Phosphorylated in vitro by TTN. In terms of processing, ubiquitinated by UBE2J1 and RNF26 at Lys-434: ubiquitinated SQSTM1 attracts specific vesicle-associated adapters, forming a molecular bridge that restrains cognate vesicles in the perinuclear region and organizes the endosomal pathway for efficient cargo transport. Ubiquitination by UBE2D2 and UBE2D3 increases its ability to bind polyubiquitin chains by destabilizing the UBA dimer interface. Deubiquitination by USP15 releases target vesicles for fast transport into the cell periphery. Ubiquitinated by the BCR(KEAP1) complex at Lys-419, increasing SQSTM1 sequestering activity and promoting its degradation. Ubiquitinated via 'Lys-29' and 'Lys-33'-linked polyubiquitination leading to xenophagic targeting of bacteria and inhibition of their replication. Acetylated at Lys-419 and Lys-434 by KAT5/TIP60, promotes activity by destabilizing the UBA dimer interface and increases binding affinity to ubiquitinated proteins. Deacetylated by HDAC6. Post-translationally, palmitoylation at Cys-288 by ZDHHC19 is required for efficient autophagic degradation of SQSTM1-cargo complexes by promoting affinity for ATG8 proteins and recruitment of p62 bodies to autophagosomes. Dealmitoylated at Cys-288 by LYPLA1. In terms of tissue distribution, ubiquitously expressed. In brain, mainly expressed by neurons, especially pyramidal neurons in the cerebral cortex and hippocampus. Also expressed by Purkinje cells and neurons in the dentate nucleus of the cerebellum and neurons of the basal ganglia (at protein level).

The protein resides in the cytoplasmic vesicle. It is found in the autophagosome. It localises to the preautophagosomal structure. Its subcellular location is the cytoplasm. The protein localises to the cytosol. The protein resides in the nucleus. It is found in the PML body. It localises to the late endosome. Its subcellular location is the lysosome. The protein localises to the endoplasmic reticulum. The protein resides in the myofibril. It is found in the sarcomere. In terms of biological role, molecular adapter required for selective macroautophagy (aggrephagy) by acting as a bridge between polyubiquitinated proteins and autophagosomes. Promotes the recruitment of ubiquitinated cargo proteins to autophagosomes via multiple domains that bridge proteins and organelles in different steps. SQSTM1 first mediates the assembly and removal of ubiquitinated proteins by undergoing liquid-liquid phase separation upon binding to ubiquitinated proteins via its UBA domain, leading to the formation of insoluble cytoplasmic inclusions, known as p62 bodies. SQSTM1 then interacts with ATG8 family proteins on autophagosomes via its LIR motif, leading to p62 body recruitment to autophagosomes, followed by autophagic clearance of ubiquitinated proteins. SQSTM1 is itself degraded along with its ubiquitinated cargos. Also required to recruit ubiquitinated proteins to PML bodies in the nucleus. Also involved in autophagy of peroxisomes (pexophagy) in response to reactive oxygen species (ROS) by acting as a bridge between ubiquitinated PEX5 receptor and autophagosomes. Acts as an activator of the NFE2L2/NRF2 pathway via interaction with KEAP1: interaction inactivates the BCR(KEAP1) complex by sequestering the complex in inclusion bodies, promoting nuclear accumulation of NFE2L2/NRF2 and subsequent expression of cytoprotective genes. Promotes relocalization of 'Lys-63'-linked ubiquitinated STING1 to autophagosomes. Involved in endosome organization by retaining vesicles in the perinuclear cloud: following ubiquitination by RNF26, attracts specific vesicle-associated adapters, forming a molecular bridge that restrains cognate vesicles in the perinuclear region and organizes the endosomal pathway for efficient cargo transport. Sequesters tensin TNS2 into cytoplasmic puncta, promoting TNS2 ubiquitination and proteasomal degradation. May regulate the activation of NFKB1 by TNF-alpha, nerve growth factor (NGF) and interleukin-1. May play a role in titin/TTN downstream signaling in muscle cells. Adapter that mediates the interaction between TRAF6 and CYLD. More potent than isoform 2 to stimulate PRKCZ-dependent phosphorylation of KCNAB2. The polypeptide is Sequestosome-1 (Sqstm1) (Rattus norvegicus (Rat)).